Reading from the N-terminus, the 459-residue chain is Bifunctional protein GlmU (459 aa).

The interval 1–229 (MSNYAIILAA…FDESLGVNDR (229 aa)) is pyrophosphorylase. UDP-N-acetyl-alpha-D-glucosamine contacts are provided by residues 8–11 (LAAG), Lys22, Gln72, and 77–78 (GT). Residue Asp102 coordinates Mg(2+). UDP-N-acetyl-alpha-D-glucosamine-binding residues include Gly139, Glu154, Asn169, and Asn227. A Mg(2+)-binding site is contributed by Asn227. The tract at residues 230–250 (VALATAEKVMRHRIARQHMVN) is linker. Residues 251-459 (GVTVVNPDSA…NKKPHHPSQK (209 aa)) are N-acetyltransferase. The UDP-N-acetyl-alpha-D-glucosamine site is built by Arg332 and Lys350. Catalysis depends on His362, which acts as the Proton acceptor. Positions 365 and 376 each coordinate UDP-N-acetyl-alpha-D-glucosamine. Acetyl-CoA is bound by residues Ala379, 385-386 (NY), Ser404, Ala422, and Arg439.

The protein in the N-terminal section; belongs to the N-acetylglucosamine-1-phosphate uridyltransferase family. In the C-terminal section; belongs to the transferase hexapeptide repeat family. As to quaternary structure, homotrimer. Requires Mg(2+) as cofactor.

Its subcellular location is the cytoplasm. It catalyses the reaction alpha-D-glucosamine 1-phosphate + acetyl-CoA = N-acetyl-alpha-D-glucosamine 1-phosphate + CoA + H(+). It carries out the reaction N-acetyl-alpha-D-glucosamine 1-phosphate + UTP + H(+) = UDP-N-acetyl-alpha-D-glucosamine + diphosphate. It functions in the pathway nucleotide-sugar biosynthesis; UDP-N-acetyl-alpha-D-glucosamine biosynthesis; N-acetyl-alpha-D-glucosamine 1-phosphate from alpha-D-glucosamine 6-phosphate (route II): step 2/2. The protein operates within nucleotide-sugar biosynthesis; UDP-N-acetyl-alpha-D-glucosamine biosynthesis; UDP-N-acetyl-alpha-D-glucosamine from N-acetyl-alpha-D-glucosamine 1-phosphate: step 1/1. Its pathway is bacterial outer membrane biogenesis; LPS lipid A biosynthesis. Functionally, catalyzes the last two sequential reactions in the de novo biosynthetic pathway for UDP-N-acetylglucosamine (UDP-GlcNAc). The C-terminal domain catalyzes the transfer of acetyl group from acetyl coenzyme A to glucosamine-1-phosphate (GlcN-1-P) to produce N-acetylglucosamine-1-phosphate (GlcNAc-1-P), which is converted into UDP-GlcNAc by the transfer of uridine 5-monophosphate (from uridine 5-triphosphate), a reaction catalyzed by the N-terminal domain. The polypeptide is Bifunctional protein GlmU (Streptococcus agalactiae serotype V (strain ATCC BAA-611 / 2603 V/R)).